The primary structure comprises 1097 residues: FHIP family protein GK23746 (1097 aa).

Residues 1 to 21 (MSWLRSSPLRQSLTRTTSSGN) are compositionally biased toward polar residues. Residues 1–25 (MSWLRSSPLRQSLTRTTSSGNGIRP) are disordered. The residue at position 491 (Ser491) is a Phosphoserine. Disordered regions lie at residues 639–684 (DVSA…SGRR), 820–856 (NENS…RSAY), and 932–1042 (NNQQ…SEPV). Residues 641 to 654 (SASSGNGTGSVVVG) show a composition bias toward low complexity. A Phosphoserine modification is found at Ser823. 2 stretches are compositionally biased toward low complexity: residues 824–852 (PLHQ…GAQQ) and 932–948 (NNQQ…SSSS). A compositionally biased stretch (polar residues) spans 949–962 (AVTTCETSLSTQPH). The segment covering 973 to 985 (TTSSTISTSSGTT) has biased composition (low complexity). Residues 986–995 (AGSGGGGGSG) are compositionally biased toward gly residues. 2 stretches are compositionally biased toward low complexity: residues 996–1006 (SNSSFSIGGST) and 1013–1022 (SNNTTNSSST).

The protein belongs to the FHIP family.

The polypeptide is FHIP family protein GK23746 (Drosophila willistoni (Fruit fly)).